The chain runs to 498 residues: Glycerol kinase (498 aa).

Threonine 14 is an ADP binding site. Positions 14, 15, and 16 each coordinate ATP. Threonine 14 lines the sn-glycerol 3-phosphate pocket. Position 18 (arginine 18) interacts with ADP. Sn-glycerol 3-phosphate is bound by residues arginine 84, glutamate 85, tyrosine 136, and aspartate 243. Residues arginine 84, glutamate 85, tyrosine 136, aspartate 243, and glutamine 244 each coordinate glycerol. ADP is bound by residues threonine 265 and glycine 308. Threonine 265, glycine 308, glutamine 312, and glycine 409 together coordinate ATP. Glycine 409 and asparagine 413 together coordinate ADP.

Belongs to the FGGY kinase family.

The catalysed reaction is glycerol + ATP = sn-glycerol 3-phosphate + ADP + H(+). Its pathway is polyol metabolism; glycerol degradation via glycerol kinase pathway; sn-glycerol 3-phosphate from glycerol: step 1/1. Inhibited by fructose 1,6-bisphosphate (FBP). Functionally, key enzyme in the regulation of glycerol uptake and metabolism. Catalyzes the phosphorylation of glycerol to yield sn-glycerol 3-phosphate. The protein is Glycerol kinase of Shewanella frigidimarina (strain NCIMB 400).